The sequence spans 736 residues: Phosphoribosylformylglycinamidine synthase subunit PurL (736 aa).

Residue H49 is part of the active site. The ATP site is built by Y52 and K91. A Mg(2+)-binding site is contributed by E93. Substrate contacts are provided by residues 94–97 (SHNH) and R116. H95 acts as the Proton acceptor in catalysis. A Mg(2+)-binding site is contributed by D117. Residue Q240 coordinates substrate. Residue D268 participates in Mg(2+) binding. Substrate is bound at residue 312 to 314 (ESQ). The ATP site is built by D493 and G530. N531 is a Mg(2+) binding site. A substrate-binding site is contributed by S533.

It belongs to the FGAMS family. In terms of assembly, monomer. Part of the FGAM synthase complex composed of 1 PurL, 1 PurQ and 2 PurS subunits.

It is found in the cytoplasm. It catalyses the reaction N(2)-formyl-N(1)-(5-phospho-beta-D-ribosyl)glycinamide + L-glutamine + ATP + H2O = 2-formamido-N(1)-(5-O-phospho-beta-D-ribosyl)acetamidine + L-glutamate + ADP + phosphate + H(+). It participates in purine metabolism; IMP biosynthesis via de novo pathway; 5-amino-1-(5-phospho-D-ribosyl)imidazole from N(2)-formyl-N(1)-(5-phospho-D-ribosyl)glycinamide: step 1/2. Functionally, part of the phosphoribosylformylglycinamidine synthase complex involved in the purines biosynthetic pathway. Catalyzes the ATP-dependent conversion of formylglycinamide ribonucleotide (FGAR) and glutamine to yield formylglycinamidine ribonucleotide (FGAM) and glutamate. The FGAM synthase complex is composed of three subunits. PurQ produces an ammonia molecule by converting glutamine to glutamate. PurL transfers the ammonia molecule to FGAR to form FGAM in an ATP-dependent manner. PurS interacts with PurQ and PurL and is thought to assist in the transfer of the ammonia molecule from PurQ to PurL. This is Phosphoribosylformylglycinamidine synthase subunit PurL from Rhodopseudomonas palustris (strain BisB5).